A 415-amino-acid chain; its full sequence is Multifunctional CCA protein (415 aa).

Residues glycine 8 and arginine 11 each coordinate ATP. 2 residues coordinate CTP: glycine 8 and arginine 11. Aspartate 21 and aspartate 23 together coordinate Mg(2+). Residues arginine 91, arginine 143, and arginine 146 each coordinate ATP. Residues arginine 91, arginine 143, and arginine 146 each coordinate CTP. The HD domain maps to 232 to 333; it reads TGVHVMMVID…TRLLERCDAL (102 aa).

This sequence belongs to the tRNA nucleotidyltransferase/poly(A) polymerase family. Bacterial CCA-adding enzyme type 1 subfamily. Monomer. Can also form homodimers and oligomers. The cofactor is Mg(2+). Ni(2+) is required as a cofactor.

The enzyme catalyses a tRNA precursor + 2 CTP + ATP = a tRNA with a 3' CCA end + 3 diphosphate. The catalysed reaction is a tRNA with a 3' CCA end + 2 CTP + ATP = a tRNA with a 3' CCACCA end + 3 diphosphate. Catalyzes the addition and repair of the essential 3'-terminal CCA sequence in tRNAs without using a nucleic acid template. Adds these three nucleotides in the order of C, C, and A to the tRNA nucleotide-73, using CTP and ATP as substrates and producing inorganic pyrophosphate. tRNA 3'-terminal CCA addition is required both for tRNA processing and repair. Also involved in tRNA surveillance by mediating tandem CCA addition to generate a CCACCA at the 3' terminus of unstable tRNAs. While stable tRNAs receive only 3'-terminal CCA, unstable tRNAs are marked with CCACCA and rapidly degraded. This is Multifunctional CCA protein from Cupriavidus pinatubonensis (strain JMP 134 / LMG 1197) (Cupriavidus necator (strain JMP 134)).